A 237-amino-acid polypeptide reads, in one-letter code: HTH-type transcriptional regulator GmuR (237 aa).

The HTH gntR-type domain occupies 1 to 69 (MNKYEIIANE…RGHGTFIIQS (69 aa)). A DNA-binding region (H-T-H motif) is located at residues 29 to 48 (EVSLAKEFNSSRMTMKRALD).

Its subcellular location is the cytoplasm. Its function is as follows. Transcriptional repressor of the gmuBACDREFG operon which is involved in the uptake and degradation of glucomannan. The sequence is that of HTH-type transcriptional regulator GmuR (gmuR) from Bacillus subtilis (strain 168).